A 391-amino-acid chain; its full sequence is E3 ubiquitin-protein ligase RMND5A (391 aa).

Positions 114–146 (SQQILSEVMVEHFFRQGMLDVAEELCQEAGLSI) constitute a LisH domain. In terms of domain architecture, CTLH spans 153–210 (PFVELNRILEALKVRVLRPALEWAVSNREMLMAQNSSLEFKLHRLYFISLLMGGTVNQ). The RING-Gid-type zinc-finger motif lies at 336–377 (CPILRQQTTDNNPPMKLVCGHIISRDALNKMFNGSKLKCPYC).

As to quaternary structure, identified in the CTLH complex that contains at least RANBP9, MKLN1, MAEA, RMND5A, GID8 and ARMC8.

It is found in the nucleus. The protein resides in the nucleoplasm. It localises to the cytoplasm. The catalysed reaction is S-ubiquitinyl-[E2 ubiquitin-conjugating enzyme]-L-cysteine + [acceptor protein]-L-lysine = [E2 ubiquitin-conjugating enzyme]-L-cysteine + N(6)-ubiquitinyl-[acceptor protein]-L-lysine.. Its function is as follows. E3 ubiquitin-protein ligase component of the CTLH complex. This is E3 ubiquitin-protein ligase RMND5A (rmnd5a) from Xenopus tropicalis (Western clawed frog).